Consider the following 594-residue polypeptide: Spindle pole body-associated protein CIK1 (594 aa).

The interval 1-29 (MNNSKIPKLSFHSDPNNVTRDFPKTKRQK) is disordered. The stretch at 81 to 360 (IERVKNNERK…VNELEKVQQE (280 aa)) forms a coiled coil.

As to quaternary structure, interacts with KAR3; the interaction is direct.

The protein resides in the nucleus. Its subcellular location is the cytoplasm. The protein localises to the cytoskeleton. It localises to the microtubule organizing center. It is found in the spindle pole body. The protein resides in the spindle. Its function is as follows. Together with the minus end-directed microtubule motor KAR3, involved in spindle midzone assembly, karyogamy (nuclear fusion) during mating, and with an essential function in meiosis I. To contribute to spindle midzone assembly during mitotic metaphase, the KAR3-CIK1 motor cross-links anti-parallel microtubules to align them on the spindle axis; as the motor travels polewards splayed microtubules are pulled into alignment. During the karyogamy (nuclear fusion) step of mating, KAR3-CIK1 cross-links antiparallel cytoplasmic microtubules emanating from the spindle pole bodies of mating partners; the motor activity of KAR3 creates the force that pulls the nuclei together by sliding cross-linked microtubules past one another. KAR3-CIK1 promotes microtubule shortening predominantly from the microtubule plus-end. Required for interhomolog recombination, synapsis of homologous chromosomes and establishment of a meiosis I spindle. The sequence is that of Spindle pole body-associated protein CIK1 (CIK1) from Saccharomyces cerevisiae (strain ATCC 204508 / S288c) (Baker's yeast).